The following is a 250-amino-acid chain: 2,5-dichloro-2,5-cyclohexadiene-1,4-diol dehydrogenase (250 aa).

9–34 (IIVTGGGSGIGRATVELLVASGANVA) provides a ligand contact to NAD(+). Serine 141 contacts substrate. The active-site Proton acceptor is the tyrosine 154.

It belongs to the short-chain dehydrogenases/reductases (SDR) family.

It catalyses the reaction 2,5-dichlorocyclohexa-2,5-dien-1,4-diol + NAD(+) = 2,5-dichlorohydroquinone + NADH + H(+). It functions in the pathway xenobiotic degradation; gamma-hexachlorocyclohexane degradation. Catalyzes the dehydrogenation of 2,5-dichloro-2,5-cyclohexadiene-1,4-diol (2,5-DDOL) to 2,5-dichlorohydroquinone (2,5-DCHQ), a step in the degradation of gamma-hexachlorocyclohexane (gamma-HCH or lindane). Has an essential role in this assimilation pathway that allows S.japonicum UT26 to grow on gamma-HCH as the sole source of carbon and energy. The protein is 2,5-dichloro-2,5-cyclohexadiene-1,4-diol dehydrogenase of Sphingobium indicum (strain DSM 16413 / CCM 7287 / MTCC 6362 / UT26 / NBRC 101211 / UT26S) (Sphingobium japonicum).